The following is a 296-amino-acid chain: tRNA uridine(34) hydroxylase (296 aa).

The region spanning 130-225 is the Rhodanese domain; sequence RGDDVVFFDG…YGEAYGNDGY (96 aa). Residue C185 is the Cysteine persulfide intermediate of the active site.

This sequence belongs to the TrhO family.

It carries out the reaction uridine(34) in tRNA + AH2 + O2 = 5-hydroxyuridine(34) in tRNA + A + H2O. Functionally, catalyzes oxygen-dependent 5-hydroxyuridine (ho5U) modification at position 34 in tRNAs. This Corynebacterium kroppenstedtii (strain DSM 44385 / JCM 11950 / CIP 105744 / CCUG 35717) protein is tRNA uridine(34) hydroxylase.